We begin with the raw amino-acid sequence, 437 residues long: Transmembrane protein with metallophosphoesterase domain (437 aa).

Transmembrane regions (helical) follow at residues 7-27 (LSAEGKVGIASGVVFFSMLIS), 41-61 (ALLFRVQFLLFINSLLLLGSL), 87-107 (IIVLLFLALVHGSYLCMFFLV), 116-136 (LLSFSCLGVYVILLFFLFVFG), and 164-184 (VLALIITAVLAVYGLVNAAQP). Residues D211, H213, D243, N274, H376, and H378 each contribute to the a divalent metal cation site.

The protein belongs to the metallophosphoesterase superfamily. LOC643853 family. A divalent metal cation serves as cofactor.

The protein resides in the membrane. This is Transmembrane protein with metallophosphoesterase domain (tmppe) from Danio rerio (Zebrafish).